Here is a 259-residue protein sequence, read N- to C-terminus: UPF0246 protein PP_1289 (259 aa).

The protein belongs to the UPF0246 family.

The sequence is that of UPF0246 protein PP_1289 from Pseudomonas putida (strain ATCC 47054 / DSM 6125 / CFBP 8728 / NCIMB 11950 / KT2440).